A 237-amino-acid polypeptide reads, in one-letter code: Phosphoribosylaminoimidazole-succinocarboxamide synthase (237 aa).

This sequence belongs to the SAICAR synthetase family.

It carries out the reaction 5-amino-1-(5-phospho-D-ribosyl)imidazole-4-carboxylate + L-aspartate + ATP = (2S)-2-[5-amino-1-(5-phospho-beta-D-ribosyl)imidazole-4-carboxamido]succinate + ADP + phosphate + 2 H(+). The protein operates within purine metabolism; IMP biosynthesis via de novo pathway; 5-amino-1-(5-phospho-D-ribosyl)imidazole-4-carboxamide from 5-amino-1-(5-phospho-D-ribosyl)imidazole-4-carboxylate: step 1/2. This Erwinia tasmaniensis (strain DSM 17950 / CFBP 7177 / CIP 109463 / NCPPB 4357 / Et1/99) protein is Phosphoribosylaminoimidazole-succinocarboxamide synthase.